A 428-amino-acid chain; its full sequence is GTPase Obg (428 aa).

Residues M1 to L158 form the Obg domain. The interval A117–G143 is disordered. An OBG-type G domain is found at A159–E329. Residues G165–S172, F190–V194, D212–G215, N282–D285, and S310–V312 each bind GTP. Mg(2+) is bound by residues S172 and T192. Residues T350–D428 form the OCT domain.

Belongs to the TRAFAC class OBG-HflX-like GTPase superfamily. OBG GTPase family. Monomer. Requires Mg(2+) as cofactor.

Its subcellular location is the cytoplasm. In terms of biological role, an essential GTPase which binds GTP, GDP and possibly (p)ppGpp with moderate affinity, with high nucleotide exchange rates and a fairly low GTP hydrolysis rate. Plays a role in control of the cell cycle, stress response, ribosome biogenesis and in those bacteria that undergo differentiation, in morphogenesis control. The sequence is that of GTPase Obg from Bacillus velezensis (strain DSM 23117 / BGSC 10A6 / LMG 26770 / FZB42) (Bacillus amyloliquefaciens subsp. plantarum).